A 206-amino-acid polypeptide reads, in one-letter code: Geminin (206 aa).

Positions 1–18 (MNLSMKQKQEGAQENVKN) are enriched in polar residues. Residues 1 to 42 (MNLSMKQKQEGAQENVKNSPVPRRTLKMIQPSADGSLVGREN) form a disordered region. Lysine 27 is subject to N6-acetyllysine. Residues serine 36, serine 63, and serine 64 each carry the phosphoserine modification. Residues 79–158 (TQEAFDLISK…AEVIERLSNE (80 aa)) form a necessary and sufficient for interaction with IDAS and CDT1 region. Residues 91–141 (PSSQYWKEVAEQRRKALYEALKENEKLHKEIEQKDSEIARLRKENKDLAEV) are a coiled coil. Residues 157–206 (NEPLDNFESPDSQEFDSEEEAVEYSELEDSGAGTCAEETVSSSTDARPCT) form a disordered region. Positions 167 to 185 (DSQEFDSEEEAVEYSELED) are enriched in acidic residues. Residues 167–187 (DSQEFDSEEEAVEYSELEDSG) form a homeodomain binding region. Serine 181 carries the post-translational modification Phosphoserine; by CK2. The segment covering 195-206 (TVSSSTDARPCT) has biased composition (polar residues).

The protein belongs to the geminin family. As to quaternary structure, homotetramer. Interacts with CDT1; this inhibits binding of the MCM complex to origins of replication. The complex with CDT1 exists in two forms, a 'permissive' heterotrimer and an 'inhibitory' heterohexamer. Interacts (via coiled-coil domain) with IDAS (via coiled-coil domain); this targets GMNN to the nucleus. The heterodimer formed by GMNN and MCIDAS has much lower affinity for CDT1 than the GMNN homodimer. Interacts with a subset of Hox proteins, affinity increasing from anterior to posterior types, the strongest interaction being with HOXB1, HOXC9 and HOXD10. Interacts with LRWD1 from G1/S to mitosis. In terms of processing, phosphorylated during mitosis. Phosphorylation at Ser-181 by CK2 results in enhanced binding to Hox proteins and more potent inhibitory effect on Hox transcriptional activity.

It is found in the cytoplasm. It localises to the nucleus. Functionally, inhibits DNA replication by preventing the incorporation of MCM complex into pre-replication complex (pre-RC). It is degraded during the mitotic phase of the cell cycle. Its destruction at the metaphase-anaphase transition permits replication in the succeeding cell cycle. Inhibits histone acetyltransferase activity of KAT7/HBO1 in a CDT1-dependent manner, inhibiting histone H4 acetylation and DNA replication licensing. Inhibits the transcriptional activity of a subset of Hox proteins, enrolling them in cell proliferative control. The sequence is that of Geminin (Gmnn) from Mus musculus (Mouse).